A 1912-amino-acid chain; its full sequence is Vitellogenin-1 (1912 aa).

A signal peptide spans 1–15 (MRGLISALVLTLVGS). Positions 24–663 (FGENKVYTYN…AGSLIPTMAV (640 aa)) constitute a Vitellogenin domain. N-linked (GlcNAc...) asparagine glycosylation is present at asparagine 163. The disordered stretch occupies residues 948 to 972 (DSASGETDNIRDRQSVEDVSSGNSF). Asparagine 991 carries an N-linked (GlcNAc...) asparagine glycan. 2 disordered regions span residues 1080-1329 (KILD…SYDI) and 1351-1432 (HWHS…RERN). 2 stretches are compositionally biased toward low complexity: residues 1092-1124 (NSRSSSSSASSISESSESTTSTPSSSDSDNRAS) and 1150-1235 (SSSS…SSSK). Asparagine 1206 carries an N-linked (GlcNAc...) asparagine glycan. The span at 1259–1269 (EGERSVHEQKQ) shows a compositional bias: basic and acidic residues. The segment covering 1273-1299 (SSSSSSSRASSNSRSTSSSTSSSSESS) has biased composition (low complexity). A compositionally biased stretch (basic and acidic residues) spans 1306 to 1316 (WKQDREAETKR). A compositionally biased stretch (polar residues) spans 1319-1328 (SQFNSHSSYD). The segment covering 1357-1381 (RTSSSSSSSSSESGSSHSNSSSSDS) has biased composition (low complexity). N-linked (GlcNAc...) asparagine glycosylation occurs at asparagine 1375. Residues 1397–1409 (SHRHGEKAAHSSR) are compositionally biased toward basic residues. The VWFD domain occupies 1640–1818 (STCEVSKGDF…SWVLLEETCS (179 aa)). Intrachain disulfides connect cysteine 1642–cysteine 1781 and cysteine 1665–cysteine 1817. 3 N-linked (GlcNAc...) asparagine glycosylation sites follow: asparagine 1662, asparagine 1698, and asparagine 1703.

Phosvitin, an egg yolk storage protein, is one of the most highly phosphorylated (10%) proteins in nature. Post-translationally, cathepsin D is responsible for intraoocytic processing of vitellogenin. In terms of processing, may contain intrachain disulfide bonds. In terms of tissue distribution, produced by the liver, secreted into the blood and then sequestered by receptor mediated endocytosis into growing oocytes, where it is generally cleaved, giving rise to the respective yolk components.

In terms of biological role, precursor of the egg-yolk proteins that are sources of nutrients during early development of oviparous organisms. Its function is as follows. Phosvitin is believed to be of importance in sequestering calcium, iron and other cations for the developing embryo. The chain is Vitellogenin-1 (VTG1) from Gallus gallus (Chicken).